Reading from the N-terminus, the 96-residue chain is UPF0102 protein ML1607 (96 aa).

It belongs to the UPF0102 family.

The sequence is that of UPF0102 protein ML1607 from Mycobacterium leprae (strain TN).